The following is a 490-amino-acid chain: Transmembrane protease serine 2 (490 aa).

Over 1–83 (MALNSGSPPG…ALCTSKSKKS (83 aa)) the chain is Cytoplasmic. A helical; Signal-anchor for type II membrane protein transmembrane segment spans residues 84–104 (LCLALALGTVLTGAAVAAVLL). Residues 105 to 490 (WRFWDSNCST…WIYQQMRANS (386 aa)) are Extracellular-facing. The N-linked (GlcNAc...) asparagine glycan is linked to N111. The 39-residue stretch at 111–149 (NCSTSEMECGSSGTCISSSLWCDGVAHCPNGEDENRCVR) folds into the LDL-receptor class A domain. Disulfide bonds link C112–C125, C119–C138, C132–C147, C171–C230, C184–C240, C243–C363, C279–C295, C408–C424, and C435–C463. Ca(2+) contacts are provided by D133, V135, D143, and E144. The 93-residue stretch at 150–242 (LYGQSFILQV…RMVVSLRCIE (93 aa)) folds into the SRCR domain. N212 carries an N-linked (GlcNAc...) asparagine glycan. The 234-residue stretch at 254 to 487 (IVGGLNASPG…FTDWIYQQMR (234 aa)) folds into the Peptidase S1 domain. Catalysis depends on charge relay system residues H294 and D343. S439 serves as the catalytic Charge relay system. A glycan (N-linked (GlcNAc...) asparagine) is linked at N474.

This sequence belongs to the peptidase S1 family. As to quaternary structure, the catalytically active form interacts with ACE2. In terms of processing, proteolytically processed; by an autocatalytic mechanism. Autocleavage induces active conformation. Larynx, trachea and bronchi, lung, prostate and kidney.

It is found in the cell membrane. It localises to the secreted. It carries out the reaction The enzyme cleaves angiotensin-converting enzyme 2 (EC 3.4.17.23) and cleaves influenzea A and B virus and coronavirus spike glycoproteins at arginine residues.. Functionally, plasma membrane-anchored serine protease that cleaves at arginine residues. Participates in proteolytic cascades of relevance for the normal physiologic function of the prostate. Androgen-induced TMPRSS2 activates several substrates that include pro-hepatocyte growth factor/HGF, the protease activated receptor-2/F2RL1 or matriptase/ST14 leading to extracellular matrix disruption. In addition, activates trigeminal neurons and contribute to both spontaneous pain and mechanical allodynia. In terms of biological role, (Microbial infection) Essential for spread and pathogenesis of influenza A virus (strains H1N1, H3N2 and H7N9) and is involved in proteolytic cleavage and activation of hemagglutinin (HA) protein which is essential for viral infectivity. This chain is Transmembrane protease serine 2 (Tmprss2), found in Mus musculus (Mouse).